A 317-amino-acid polypeptide reads, in one-letter code: MAIVRHKQPPLRRFMMYWVDHARQAFSSLGELWRNPLASLMTLAVLGVSLALPSCFHVLLKNAEVVEGSWQTSSQISLYLRKDLPEQSILDMKQRILLYPEVESVTYMSRDEALKEFREISGFGDALDYLDSNPLPPVLSVIPDPRWQNPEGAAELLNKLNNEDGVEQGKLDLQWLTRLQGIMNLLRHTITGIAVLLLSAVLLIVGNTLRLNILNQRSEIEVLKLVGATDAFIHRPFLYTGIWFGVIGGMLAWWLTEVMVIWSEGVVNELAGLYNSNFRLVGMGAVDGINLILLGALLGLIASWFSVHRHIRDIEPS.

Residues 1-39 lie on the Cytoplasmic side of the membrane; it reads MAIVRHKQPPLRRFMMYWVDHARQAFSSLGELWRNPLAS. The chain crosses the membrane as a helical span at residues 40 to 60; sequence LMTLAVLGVSLALPSCFHVLL. Topologically, residues 61–188 are periplasmic; sequence KNAEVVEGSW…LQGIMNLLRH (128 aa). The chain crosses the membrane as a helical span at residues 189-209; that stretch reads TITGIAVLLLSAVLLIVGNTL. Topologically, residues 210–241 are cytoplasmic; it reads RLNILNQRSEIEVLKLVGATDAFIHRPFLYTG. A helical transmembrane segment spans residues 242 to 262; sequence IWFGVIGGMLAWWLTEVMVIW. Residues 263–280 lie on the Periplasmic side of the membrane; the sequence is SEGVVNELAGLYNSNFRL. A helical membrane pass occupies residues 281–301; that stretch reads VGMGAVDGINLILLGALLGLI. The Cytoplasmic segment spans residues 302 to 317; the sequence is ASWFSVHRHIRDIEPS.

Belongs to the ABC-4 integral membrane protein family. FtsX subfamily. Forms a membrane-associated complex with FtsE.

The protein resides in the cell inner membrane. In terms of biological role, part of the ABC transporter FtsEX involved in cellular division. Encoded in an operon consisting of genes ftsY, ftsE and ftsX. The sequence is that of Cell division protein FtsX from Aeromonas hydrophila.